The chain runs to 908 residues: Protein translocase subunit SecA (908 aa).

Residues Q87, 105–109 (GEGKT), and D512 each bind ATP. Residues 865–908 (GGDDGSDEMMAHTPMIRDGDKVGRNDPCPCGSGRKYKQCHGKLS) form a disordered region. A compositionally biased stretch (basic and acidic residues) spans 879–888 (MIRDGDKVGR). Residues C892, C894, C903, and H904 each coordinate Zn(2+). The segment covering 898–908 (RKYKQCHGKLS) has biased composition (basic residues).

It belongs to the SecA family. In terms of assembly, monomer and homodimer. Part of the essential Sec protein translocation apparatus which comprises SecA, SecYEG and auxiliary proteins SecDF-YajC and YidC. The cofactor is Zn(2+).

It localises to the cell inner membrane. The protein resides in the cytoplasm. It catalyses the reaction ATP + H2O + cellular proteinSide 1 = ADP + phosphate + cellular proteinSide 2.. In terms of biological role, part of the Sec protein translocase complex. Interacts with the SecYEG preprotein conducting channel. Has a central role in coupling the hydrolysis of ATP to the transfer of proteins into and across the cell membrane, serving both as a receptor for the preprotein-SecB complex and as an ATP-driven molecular motor driving the stepwise translocation of polypeptide chains across the membrane. This chain is Protein translocase subunit SecA, found in Shewanella sp. (strain MR-7).